The primary structure comprises 134 residues: MKPLIRRLSRIADSSSCNRNRSGDIHHPTSTYSSSVFLVKRATVASSVPSGHVPVNVGEDKERFVVSAELLNHPVFVGLLNRSAQEYGYTQKGVLHIPCNVFVFEQVVESLRSGIADDTSELIASLSGEDVSTE.

The protein belongs to the ARG7 family. As to quaternary structure, interacts with and inhibits PP2C-D subfamily of type 2C phosphatases such as PP2C67/PP2C-D1.

The protein localises to the cytoplasm. In terms of biological role, provide a mechanistic link between auxin and plasma membrane H(+)-ATPases (PM H(+)-ATPases, e.g. AHA1 and AHA2), and triggers PM H(+)-ATPases activity by promoting phosphorylation of their C-terminal autoinhibitory domain as a result of PP2C-D subfamily of type 2C phosphatases inhibition, thus leading to the acidification of the apoplast and the facilitation of solutes and water uptake to drive cell expansion. Plays a role in the regulation of cell expansion, root meristem patterning and auxin transport. This Arabidopsis thaliana (Mouse-ear cress) protein is Auxin-responsive protein SAUR40.